Reading from the N-terminus, the 343-residue chain is tRNA N6-adenosine threonylcarbamoyltransferase (343 aa).

His111 and His115 together coordinate Fe cation. Residues 133-137 (AVSGG), Asp166, Gly179, Asp183, and Asn273 each bind substrate. Asp301 is a binding site for Fe cation.

The protein belongs to the KAE1 / TsaD family. It depends on Fe(2+) as a cofactor.

It is found in the cytoplasm. It carries out the reaction L-threonylcarbamoyladenylate + adenosine(37) in tRNA = N(6)-L-threonylcarbamoyladenosine(37) in tRNA + AMP + H(+). Its function is as follows. Required for the formation of a threonylcarbamoyl group on adenosine at position 37 (t(6)A37) in tRNAs that read codons beginning with adenine. Is involved in the transfer of the threonylcarbamoyl moiety of threonylcarbamoyl-AMP (TC-AMP) to the N6 group of A37, together with TsaE and TsaB. TsaD likely plays a direct catalytic role in this reaction. The polypeptide is tRNA N6-adenosine threonylcarbamoyltransferase (Geotalea uraniireducens (strain Rf4) (Geobacter uraniireducens)).